The chain runs to 298 residues: 4-diphosphocytidyl-2-C-methyl-D-erythritol kinase (298 aa).

K25 is a catalytic residue. 109 to 119 (PVGGGFGGGSS) contributes to the ATP binding site. D151 is an active-site residue.

This sequence belongs to the GHMP kinase family. IspE subfamily.

It carries out the reaction 4-CDP-2-C-methyl-D-erythritol + ATP = 4-CDP-2-C-methyl-D-erythritol 2-phosphate + ADP + H(+). It functions in the pathway isoprenoid biosynthesis; isopentenyl diphosphate biosynthesis via DXP pathway; isopentenyl diphosphate from 1-deoxy-D-xylulose 5-phosphate: step 3/6. Catalyzes the phosphorylation of the position 2 hydroxy group of 4-diphosphocytidyl-2C-methyl-D-erythritol. The polypeptide is 4-diphosphocytidyl-2-C-methyl-D-erythritol kinase (Xylella fastidiosa (strain 9a5c)).